The chain runs to 537 residues: Spore coat protein SP70 (537 aa).

The N-terminal stretch at 1-20 (MRILKLAALSCLLFIAPSLS) is a signal peptide. Residues 21-140 (INCDGLSKDQ…CQIPATGGGP (120 aa)) form the DSCP-N domain. N97 carries an N-linked (GlcNAc...) asparagine glycan. The 23-residue stretch at 157-179 (SCDKVNCPNGYICTIVNQLAVCV) folds into the Follistatin-like 1 domain. Positions 183 to 246 (SSSSSSSSTT…GSHTTTGGST (64 aa)) are disordered. Follistatin-like domains follow at residues 250 to 272 (TCGN…AVCV), 278 to 296 (SCAN…GECI), 358 to 380 (TCKT…PTCV), and 389 to 415 (TCKD…EECC).

Phosphorylated and fucosylated.

The chain is Spore coat protein SP70 (cotB) from Dictyostelium discoideum (Social amoeba).